Consider the following 571-residue polypeptide: Decapping 5-like protein (571 aa).

A compositionally biased stretch (low complexity) spans 1 to 17; that stretch reads MASESSQSSSPSSSQPP. Disordered regions lie at residues 1–27, 102–141, 159–187, and 258–305; these read MASE…SPGN, LQVN…ISGY, LSSK…GSLT, and SQVV…SEAQ. In terms of domain architecture, Sm spans 25–108; it reads PGNNVGDTFI…IKDLQVNPSP (84 aa). 2 stretches are compositionally biased toward polar residues: residues 104 to 138 and 167 to 187; these read VNPS…SSPI and TQHS…GSLT. Low complexity predominate over residues 264–279; it reads SPDVSSNQSYSSNPSP. The span at 293-305 shows a compositional bias: polar residues; that stretch reads SVSSNLSPPSEAQ. The DFDF domain occupies 419–455; sequence RIPSSSIEYTEEFDFEAMNEKFKKSELWGYLGRNNQR. The FFD box signature appears at 474–489; it reads PAYNKDDFFDTISCNQ. The short motif at 498 to 518 is the TFG box element; that stretch reads QQHNQFPEHMRQVPEAFGNNF.

This sequence belongs to the LSM14 family. As to quaternary structure, homodimer. Component of the decapping complex.

It localises to the cytoplasm. The protein localises to the P-body. Functionally, as a component of the decapping complex, involved in the degradation of mRNAs. Promotes P-body formation. Translational repressor. This is Decapping 5-like protein (DCP5-L) from Arabidopsis thaliana (Mouse-ear cress).